Reading from the N-terminus, the 177-residue chain is Large ribosomal subunit protein uL6 (177 aa).

Belongs to the universal ribosomal protein uL6 family. Part of the 50S ribosomal subunit.

In terms of biological role, this protein binds to the 23S rRNA, and is important in its secondary structure. It is located near the subunit interface in the base of the L7/L12 stalk, and near the tRNA binding site of the peptidyltransferase center. The protein is Large ribosomal subunit protein uL6 of Methylobacterium sp. (strain 4-46).